A 294-amino-acid polypeptide reads, in one-letter code: uncharacterized protein (294 aa).

Disordered regions lie at residues 1–30 (MKRQ…EVSH), 51–86 (ALSD…KKRP), and 250–294 (DELN…STST). Polar residues-rich tracts occupy residues 7 to 26 (QDSM…TPTK), 66 to 81 (PYSS…NSST), and 255 to 277 (PMNN…NLPT).

It is found in the nucleus. This is an uncharacterized protein from Schizosaccharomyces pombe (strain 972 / ATCC 24843) (Fission yeast).